Consider the following 161-residue polypeptide: Nucleotide-binding protein Sama_2557 (161 aa).

It belongs to the YajQ family.

Nucleotide-binding protein. This is Nucleotide-binding protein Sama_2557 from Shewanella amazonensis (strain ATCC BAA-1098 / SB2B).